We begin with the raw amino-acid sequence, 330 residues long: SUMO-activating enzyme subunit 1 (330 aa).

The protein belongs to the ubiquitin-activating E1 family. As to quaternary structure, heterodimer of sae1 and sae2. The complex binds sumo via sae2.

The protein resides in the nucleus. Its pathway is protein modification; protein sumoylation. In terms of biological role, the dimeric enzyme acts as an E1 ligase for sumo. It mediates ATP-dependent activation of sumo and formation of a thioester with a conserved cysteine residue on sae2. The chain is SUMO-activating enzyme subunit 1 (sae1) from Dictyostelium discoideum (Social amoeba).